Reading from the N-terminus, the 206-residue chain is Small ribosomal subunit protein uS4 (206 aa).

The S4 RNA-binding domain maps to 96-158; it reads SRLDNVVYRM…AKKQLRIQNA (63 aa).

This sequence belongs to the universal ribosomal protein uS4 family. In terms of assembly, part of the 30S ribosomal subunit. Contacts protein S5. The interaction surface between S4 and S5 is involved in control of translational fidelity.

In terms of biological role, one of the primary rRNA binding proteins, it binds directly to 16S rRNA where it nucleates assembly of the body of the 30S subunit. With S5 and S12 plays an important role in translational accuracy. This Francisella tularensis subsp. tularensis (strain FSC 198) protein is Small ribosomal subunit protein uS4.